The sequence spans 542 residues: Hydroxylamine reductase (542 aa).

[4Fe-4S] cluster-binding residues include Cys5, Cys8, Cys17, and Cys23. The hybrid [4Fe-2O-2S] cluster site is built by His237, Glu261, Cys305, Cys397, Cys425, Cys450, Glu485, and Lys487. Cys397 is subject to Cysteine persulfide.

Belongs to the HCP family. It depends on [4Fe-4S] cluster as a cofactor. Requires hybrid [4Fe-2O-2S] cluster as cofactor.

Its subcellular location is the cytoplasm. The catalysed reaction is A + NH4(+) + H2O = hydroxylamine + AH2 + H(+). Catalyzes the reduction of hydroxylamine to form NH(3) and H(2)O. The polypeptide is Hydroxylamine reductase (Acetivibrio thermocellus (strain ATCC 27405 / DSM 1237 / JCM 9322 / NBRC 103400 / NCIMB 10682 / NRRL B-4536 / VPI 7372) (Clostridium thermocellum)).